We begin with the raw amino-acid sequence, 303 residues long: Probable 5-dehydro-4-deoxyglucarate dehydratase (303 aa).

Belongs to the DapA family.

It catalyses the reaction 5-dehydro-4-deoxy-D-glucarate + H(+) = 2,5-dioxopentanoate + CO2 + H2O. It participates in carbohydrate acid metabolism; D-glucarate degradation; 2,5-dioxopentanoate from D-glucarate: step 2/2. The chain is Probable 5-dehydro-4-deoxyglucarate dehydratase from Pseudomonas savastanoi pv. phaseolicola (strain 1448A / Race 6) (Pseudomonas syringae pv. phaseolicola (strain 1448A / Race 6)).